A 92-amino-acid polypeptide reads, in one-letter code: Bombyxin A-5 (92 aa).

Positions 1–19 (MKLLLAIALMLTTVMWAST) are cleaved as a signal peptide. Position 20 is a pyrrolidone carboxylic acid (Q20). 3 cysteine pairs are disulfide-bonded: C29–C79, C41–C92, and C78–C83. Residues 50–71 (SDAQFASYGSAWLMPYSEGRDQ) constitute a propeptide, c peptide like.

The protein belongs to the insulin family. Heterodimer of a B chain and an A chain linked by two disulfide bonds.

Its subcellular location is the secreted. Its function is as follows. Brain peptide responsible for activation of prothoracic glands to produce ecdysone in insects. The polypeptide is Bombyxin A-5 (BBXA5) (Bombyx mori (Silk moth)).